A 506-amino-acid chain; its full sequence is Hexokinase-6 (506 aa).

A helical membrane pass occupies residues 6–26 (VVGTAVVVCAAAAAAVGVAVV). The Hexokinase domain maps to 43-497 (RRAAAVIEEV…SGIGAALLAA (455 aa)). Residues 98–236 (TGDEHGLFYA…GLDMKVTALV (139 aa)) are hexokinase small subdomain. Residues glycine 112, threonine 113, and asparagine 114 each coordinate ADP. The D-glucose site is built by threonine 202, lysine 203, asparagine 237, and aspartate 238. Positions 237–486 (NDTVGTLAGG…SSVVVKLAND (250 aa)) are hexokinase large subdomain. Residue threonine 261 coordinates ADP. 3 residues coordinate D-glucose: asparagine 264, glutamate 292, and glutamate 323. Residue glycine 451 coordinates ADP.

The protein belongs to the hexokinase family. In terms of tissue distribution, expressed in roots, leaves, flowers, immature seeds and endosperm.

The protein localises to the plastid. Its subcellular location is the chloroplast outer membrane. The catalysed reaction is a D-hexose + ATP = a D-hexose 6-phosphate + ADP + H(+). It carries out the reaction D-fructose + ATP = D-fructose 6-phosphate + ADP + H(+). The enzyme catalyses D-glucose + ATP = D-glucose 6-phosphate + ADP + H(+). The protein operates within carbohydrate metabolism; hexose metabolism. It participates in carbohydrate degradation; glycolysis; D-glyceraldehyde 3-phosphate and glycerone phosphate from D-glucose: step 1/4. In terms of biological role, fructose and glucose phosphorylating enzyme. Functions as a glucose sensor for plant growth and photosynthesis. The polypeptide is Hexokinase-6 (HXK6) (Oryza sativa subsp. japonica (Rice)).